We begin with the raw amino-acid sequence, 121 residues long: Small ribosomal subunit protein uS13 (121 aa).

Residues 97–121 (VRGQRTRTNARTRRGARKTVAGKKK) are disordered. Positions 100-121 (QRTRTNARTRRGARKTVAGKKK) are enriched in basic residues.

It belongs to the universal ribosomal protein uS13 family. Part of the 30S ribosomal subunit. Forms a loose heterodimer with protein S19. Forms two bridges to the 50S subunit in the 70S ribosome.

Its function is as follows. Located at the top of the head of the 30S subunit, it contacts several helices of the 16S rRNA. In the 70S ribosome it contacts the 23S rRNA (bridge B1a) and protein L5 of the 50S subunit (bridge B1b), connecting the 2 subunits; these bridges are implicated in subunit movement. Contacts the tRNAs in the A and P-sites. The polypeptide is Small ribosomal subunit protein uS13 (Prochlorococcus marinus (strain MIT 9313)).